The chain runs to 242 residues: Carboxy-S-adenosyl-L-methionine synthase (242 aa).

Residues Tyr39, 64 to 66 (GCS), 89 to 90 (DN), 117 to 118 (DI), Asn132, and Arg199 each bind S-adenosyl-L-methionine.

It belongs to the class I-like SAM-binding methyltransferase superfamily. Cx-SAM synthase family. In terms of assembly, homodimer.

The enzyme catalyses prephenate + S-adenosyl-L-methionine = carboxy-S-adenosyl-L-methionine + 3-phenylpyruvate + H2O. In terms of biological role, catalyzes the conversion of S-adenosyl-L-methionine (SAM) to carboxy-S-adenosyl-L-methionine (Cx-SAM). The polypeptide is Carboxy-S-adenosyl-L-methionine synthase (Aliivibrio fischeri (strain MJ11) (Vibrio fischeri)).